Here is an 848-residue protein sequence, read N- to C-terminus: MTATVENLTFQKDTLGNAVDKNTSRLELRSYSLAGRHGSTEPLVLAWSSQFRRLTWGCALDALHRSPCVAASQHGVTHLIRSSRTPHSTRCRKEDAQPGHHGNGAASVTAQARGQRSVLQVPLPVPRSCLFSESFVVSVSSQSRFLASVPGTGVQRSTAADMAASTAAGKQRIPKVAKVKNKAPAEVQITAEQLLREAKERELELLPPPPQQKITDEEELNDYKLRKRKTFEDNIRKNRTVISNWIKYAQWEESLKEIQRARSIYERALDVDYRNITLWLKYAEMEMKNRQVNHARNIWDRAITTLPRVNQFWYKYTYMEEMLGNVAGARQVFERWMEWQPEEQAWHSYINFELRYKEVDRARTIYERFVLVHPDVKNWIKYARFEEKHAYFAHARKVYERAVEFFGDEHMDEHLYVAFAKFEENQKEFERVRVIYKYALDRISKQDAQELFKNYTIFEKKFGDRRGIEDIIVSKRRFQYEEEVKANPHNYDAWFDYLRLVESDAEAEAVREVYERAIANVPPIQEKRHWKRYIYLWINYALYEELEAKDPERTRQVYQASLELIPHKKFTFAKMWILYAQFEIRQKNLSLARRALGTSIGKCPKNKLFKVYIELELQLREFDRCRKLYEKFLEFGPENCTSWIKFAELETILGDIDRARAIYELAISQPRLDMPEVLWKSYIDFEIEQEETERTRNLYRRLLQRTQHVKVWISFAQFELSSGKEGSLTKCRQIYEEANKTMRNCEEKEERLMLLESWRSFEEEFGTASDKERVDKLMPEKVKKRRKVQTDDGSDAGWEEYFDYIFPEDAANQPNLKLLAMAKLWKKQQQEKEDAEHHPDEDVDESES.

The residue at position 2 (threonine 2) is an N-acetylalanine. A disordered region spans residues 81–106; the sequence is RSSRTPHSTRCRKEDAQPGHHGNGAA. HAT repeat units follow at residues 222-254, 256-288, 290-322, 324-355, 357-388, 390-425, 427-461, 471-503, 505-539, 549-585, 587-618, 620-652, 654-688, 690-721, 726-767, 769-807, and 809-834; these read DYKL…WEES, KEIQ…MEMK, RQVN…MEEM, GNVA…FELR, KEVD…FEEK, AYFA…FEEN, KEFE…FEKK, IIVS…LVES, AEAE…LWIN, KDPE…FEIR, KNLS…LELQ, REFD…LETI, GDID…FEIE, EETE…FELS, GSLT…EFGT, SDKE…YIFP, and DAAN…EKED. The tract at residues 411-628 is mediates interaction with HSP90; it reads MDEHLYVAFA…LREFDRCRKL (218 aa). The residue at position 503 (serine 503) is a Phosphoserine. Positions 827–848 are disordered; sequence KQQQEKEDAEHHPDEDVDESES. Positions 828–840 are enriched in basic and acidic residues; it reads QQQEKEDAEHHPD.

The protein belongs to the crooked-neck family. Identified in the spliceosome C complex. Present in a spliceosome complex assembled in vitro containing CRNKL1, HPRP8BP and SNRPB2. Component of the minor spliceosome, which splices U12-type introns. Isoform 2 seems to be predominant in the spliceosome complex. Interacts with PPIL2 (via the PPIase cyclophilin-type domain); they may form a trimeric complex with HSP90. Widely expressed. Highly expressed in testis. Not detected in brain and lung.

It is found in the nucleus. The protein resides in the nucleus speckle. Involved in pre-mRNA splicing process. As a component of the minor spliceosome, involved in the splicing of U12-type introns in pre-mRNAs. This is Crooked neck-like protein 1 (CRNKL1) from Homo sapiens (Human).